A 292-amino-acid polypeptide reads, in one-letter code: Putative ribonuclease 3 (292 aa).

One can recognise an RNase III domain in the interval 32–158 (LGMSDEYIPY…FFGATEWLID (127 aa)). Positions 204 to 276 (DAKTRFNEVI…ASRALETLAL (73 aa)) constitute a DRBM domain.

It belongs to the IIV-6 142R family.

It carries out the reaction Endonucleolytic cleavage to 5'-phosphomonoester.. In terms of biological role, digests double-stranded RNA. This chain is Putative ribonuclease 3, found in Acheta domesticus (House cricket).